The primary structure comprises 352 residues: MVVDDSAVVRQVLVGVLNDAPGIDVIATAADPLLAIEKMRQHWPDVIVLDVEMPRMDGITFLRKIMSERPTPVVICSTLTEKGARVTMDALAAGAVAVVTKPRLGLKQFLTDSADELVATVRSAARANVKRLAARVTAAPLEAEVKHTADIILPAQSGRALAQTTERIVAIGTSTGGTQALEEVLTALPRVCPGIVIVQHMPEKFTAAFAARLNGLCQIAVKEAANNDRVMPGRALIAPGGKHLLLRRSGAQYFVEVLEGPPVNRHRPSVDVLFRSAARAAGSNALGIIMTGMGDDGAAGLLEMRQAGARTVAQDEHTSIVFGMPKEAIKRGGADRILPLGAMAREIVTQLQ.

Residues 1–116 (MVVDDSAVVR…KQFLTDSADE (116 aa)) form the Response regulatory domain. Position 50 is a 4-aspartylphosphate (Asp-50). The CheB-type methylesterase domain maps to 162–352 (AQTTERIVAI…MAREIVTQLQ (191 aa)). Catalysis depends on residues Ser-174, His-200, and Asp-296.

This sequence belongs to the CheB family. In terms of processing, phosphorylated by CheA. Phosphorylation of the N-terminal regulatory domain activates the methylesterase activity.

The protein localises to the cytoplasm. The catalysed reaction is [protein]-L-glutamate 5-O-methyl ester + H2O = L-glutamyl-[protein] + methanol + H(+). It carries out the reaction L-glutaminyl-[protein] + H2O = L-glutamyl-[protein] + NH4(+). Involved in chemotaxis. Part of a chemotaxis signal transduction system that modulates chemotaxis in response to various stimuli. Catalyzes the demethylation of specific methylglutamate residues introduced into the chemoreceptors (methyl-accepting chemotaxis proteins or MCP) by CheR. Also mediates the irreversible deamidation of specific glutamine residues to glutamic acid. The protein is Protein-glutamate methylesterase/protein-glutamine glutaminase 2 of Xanthomonas euvesicatoria pv. vesicatoria (strain 85-10) (Xanthomonas campestris pv. vesicatoria).